Consider the following 72-residue polypeptide: Large ribosomal subunit protein bL31 (72 aa).

Cysteine 16, cysteine 18, cysteine 37, and cysteine 40 together coordinate Zn(2+).

The protein belongs to the bacterial ribosomal protein bL31 family. Type A subfamily. Part of the 50S ribosomal subunit. The cofactor is Zn(2+).

In terms of biological role, binds the 23S rRNA. This is Large ribosomal subunit protein bL31 from Idiomarina loihiensis (strain ATCC BAA-735 / DSM 15497 / L2-TR).